A 455-amino-acid chain; its full sequence is Outer capsid protein sigma-1 (455 aa).

Residues 1–307 (MDPRLREEVV…YPIADVSGGI (307 aa)) form a tail region. The stretch at 116–148 (LAELRVDHDNLVARVDTAERNIGSLTTELSTLT) forms a coiled coil. Asn-231, Asn-264, and Asn-282 each carry an N-linked (GlcNAc...) asparagine; by host glycan. The tract at residues 308–455 (GMSPNYRFRQ…MTVSYPRSFT (148 aa)) is head.

It belongs to the orthoreovirus sigma-1 protein family. In terms of assembly, homotrimer. Interacts (via the head region) with human F11R. In terms of processing, undergoes dramatic conformational rearrangements during viral disassembly in the endocytic pathway.

It is found in the virion. Functionally, fiber-like molecule that attaches the virion to the host cell membrane by binding to the primary receptor F11R/JAM-A and to sialic acid containing proteins (coreceptor). The interaction of sigma-1 with F11R is required for NF-kB activation and apoptosis. Binding to both sialic acid and F11R is required to induce maximal levels of apoptosis. The protein is Outer capsid protein sigma-1 (S1) of Reovirus type 3 (strain Dearing) (T3D).